The following is a 247-amino-acid chain: DNA-directed RNA polymerase subunit Rpo3 (247 aa).

Belongs to the archaeal Rpo3/eukaryotic RPB3 RNA polymerase subunit family. In terms of assembly, part of the RNA polymerase complex.

It localises to the cytoplasm. The enzyme catalyses RNA(n) + a ribonucleoside 5'-triphosphate = RNA(n+1) + diphosphate. DNA-dependent RNA polymerase (RNAP) catalyzes the transcription of DNA into RNA using the four ribonucleoside triphosphates as substrates. This chain is DNA-directed RNA polymerase subunit Rpo3, found in Natronomonas pharaonis (strain ATCC 35678 / DSM 2160 / CIP 103997 / JCM 8858 / NBRC 14720 / NCIMB 2260 / Gabara) (Halobacterium pharaonis).